Reading from the N-terminus, the 781-residue chain is Potassium transporter 5 (781 aa).

Over residues Met-1 to Gly-11 the composition is skewed to polar residues. The tract at residues Met-1 to Glu-24 is disordered. The Cytoplasmic segment spans residues Met-1–His-63. The helical transmembrane segment at Leu-64 to Phe-84 threads the bilayer. Topologically, residues Ser-85 to Gly-100 are extracellular. A helical transmembrane segment spans residues Val-101–Val-121. The Cytoplasmic portion of the chain corresponds to Leu-122–Lys-187. The chain crosses the membrane as a helical span at residues Ile-188–Thr-208. The Extracellular portion of the chain corresponds to Pro-209–Lys-225. A helical transmembrane segment spans residues Ser-226–Val-246. At Gln-247–Ser-257 the chain is on the cytoplasmic side. The chain crosses the membrane as a helical span at residues Phe-258–Phe-278. The Extracellular portion of the chain corresponds to Lys-279 to Gly-304. The helical transmembrane segment at Trp-305 to Leu-325 threads the bilayer. The Cytoplasmic segment spans residues Gly-326 to Gln-334. Residues Ile-335 to Tyr-355 form a helical membrane-spanning segment. The Extracellular segment spans residues Leu-356–Val-381. The chain crosses the membrane as a helical span at residues Val-382 to Ile-402. At Ala-403 to Gln-426 the chain is on the cytoplasmic side. A helical transmembrane segment spans residues Val-427 to Phe-447. At Gln-448–Gly-458 the chain is on the extracellular side. The helical transmembrane segment at Ile-459–Ile-479 threads the bilayer. The Cytoplasmic segment spans residues Trp-480–Lys-481. The chain crosses the membrane as a helical span at residues Thr-482–Leu-502. At Ser-503–Gly-512 the chain is on the extracellular side. A helical transmembrane segment spans residues Gly-513–Val-533. Residues His-534–Ile-781 lie on the Cytoplasmic side of the membrane. Residues Val-681–Asn-707 are disordered. Polar residues predominate over residues Asp-683–Gln-700.

Belongs to the HAK/KUP transporter (TC 2.A.72.3) family. As to expression, expressed in root epidermis, parenchyma of stele tissue and primordial of the lateral root, root-shoot junctions and leaf sheaths. Expressed in germinated embryonic tissue, young tillers, flower organs and pedicels.

It is found in the cell membrane. It carries out the reaction K(+)(in) = K(+)(out). Functionally, high-affinity potassium transporter. Its potassium transporter activity does not seem to be affected by high sodium and low potassium concentrations in the extracellular environment. Invloved in salt stress tolerance by enhancing root potassium uptake and translocation to the shoot to prevent sodium influx during salt stress. Involved in the positive regulation of disease resistance against the rice grassy stunt virus by promoting potassium transport and increasing endogenous plant potassium. This chain is Potassium transporter 5 (HAK5), found in Oryza sativa subsp. japonica (Rice).